We begin with the raw amino-acid sequence, 284 residues long: MNNNHSYDDRSFHIPLHPSNTSNPNPNLQFALSSSYDHSPKKKRTKTVASSSSSSPKSASKPKYTKKPDPNAPKITRPCTECGRKFWSWKALFGHMRCHPERQWRGINPPPNYRVPTAASSKQLNQILPNWVSFMSEEDHEVASCLLMLSNGTPSSSSIERFECGGCKKVFGSHQALGGHRASHKNVKGCFAITNVTDDPMTVSTSSGHDHQGKILTFSGHHKCNICFRVFSSGQALGGHMRCHWEKEEEPMISGALDLNVPPTIQDLSTSDTSGCCLDLRLGL.

The segment covering 1 to 12 (MNNNHSYDDRSF) has biased composition (basic and acidic residues). Positions 1–76 (MNNNHSYDDR…KPDPNAPKIT (76 aa)) are disordered. Positions 18-37 (PSNTSNPNPNLQFALSSSYD) are enriched in polar residues. Over residues 47 to 62 (TVASSSSSSPKSASKP) the composition is skewed to low complexity. 3 C2H2-type zinc fingers span residues 77 to 99 (RPCTECGRKFWSWKALFGHMRCH), 162 to 184 (FECGGCKKVFGSHQALGGHRASH), and 222 to 244 (HKCNICFRVFSSGQALGGHMRCH).

In terms of assembly, interacts (via the EAR motif) with TPL. As to expression, expressed exclusively in pollen.

It localises to the nucleus. Its function is as follows. Mediates the regulation of male germ cell division by DUO1. This is Zinc finger protein ZAT3 from Arabidopsis thaliana (Mouse-ear cress).